The sequence spans 78 residues: Bowman-Birk type proteinase inhibitors I-A, I-B, and I-A' (78 aa).

7 cysteine pairs are disulfide-bonded: C18–C72, C19–C34, C22–C68, C24–C32, C42–C49, C46–C61, and C51–C59.

This sequence belongs to the Bowman-Birk serine protease inhibitor family.

Functionally, these inhibitors strongly inhibit trypsin. The protein is Bowman-Birk type proteinase inhibitors I-A, I-B, and I-A' of Phaseolus angularis (Azuki bean).